The chain runs to 294 residues: MNQKQLEQMKTSKGFIAALDQSGGSTPKALAAYGIPEDSYNNEDEMFDLVHEMRTRIITSKAFDSDSIIGAILFEQTMDREIEGMYTGDYLAEKKGIVPFLKVDKGLAEETNGVQLMKPIDNLDETLRRANERNIFGTKMRSVIKQANPKAIKEVVDQQFDIGKKIIAAGLVPIIEPEVDIHSPEKEKCEDLLKAEIINHLNQLSEDENVMLKLTIPTKKNLYKELIDHPRVVRVVALSGGYSTDVANEKLKENNGLIASFSRALSQDLNADQSDEDFNLALEKAVKSIYDASV.

Catalysis depends on Glu176, which acts as the Proton acceptor. Catalysis depends on Lys213, which acts as the Schiff-base intermediate with dihydroxyacetone-P.

The protein belongs to the class I fructose-bisphosphate aldolase family.

The catalysed reaction is beta-D-fructose 1,6-bisphosphate = D-glyceraldehyde 3-phosphate + dihydroxyacetone phosphate. The protein operates within carbohydrate degradation; glycolysis; D-glyceraldehyde 3-phosphate and glycerone phosphate from D-glucose: step 4/4. This Oceanobacillus iheyensis (strain DSM 14371 / CIP 107618 / JCM 11309 / KCTC 3954 / HTE831) protein is Fructose-bisphosphate aldolase class 1.